The primary structure comprises 129 residues: Glycine cleavage system H protein (129 aa).

A Lipoyl-binding domain is found at 23 to 104 (SVTVGITQHA…CYAAWLFKLK (82 aa)). Lys-64 carries the N6-lipoyllysine modification.

It belongs to the GcvH family. In terms of assembly, the glycine cleavage system is composed of four proteins: P, T, L and H. Requires (R)-lipoate as cofactor.

The glycine cleavage system catalyzes the degradation of glycine. The H protein shuttles the methylamine group of glycine from the P protein to the T protein. This is Glycine cleavage system H protein from Nitrosomonas europaea (strain ATCC 19718 / CIP 103999 / KCTC 2705 / NBRC 14298).